The chain runs to 181 residues: MKPKKNQYQQMQAFDNMQGYQPQFGANPYPQQGQGSQMQTMGMQPMMPMQQGQQGQQGQQGFGFPGQQQGGGFQIPSGPTPSGPGQSVPGMLPVEESYIENILRLNRGKTATIYMTFENSKEWGSKIFRGVIEAAGRDHIIISDPKSGTRYLLLTIYLDYITFDEEIAYTYPYSMASYSPR.

Isoglutamyl lysine isopeptide (Lys-Gln) (interchain with Q-?) cross-links involve residues Lys2, Lys4, and Lys5. The segment at 19-89 is disordered; it reads GYQPQFGANP…TPSGPGQSVP (71 aa). Residues 30 to 57 are compositionally biased toward low complexity; sequence PQQGQGSQMQTMGMQPMMPMQQGQQGQQ. Positions 58 to 73 are enriched in gly residues; it reads GQQGFGFPGQQQGGGF.

In terms of assembly, multimer. Is cross-linked by Tgl and YabG into an insoluble high-molecular-mass complex that appears very late in sporulation. Post-translationally, three N-terminal lysines form epsilon-(gamma-glutamyl)lysine isopeptide bonds with glutamines of other spore coat proteins.

The protein resides in the spore coat. In terms of biological role, essential for the localization of CwlJ in the spore coat and for spore germination triggered by calcium and dipicolinic acid (DPA). Its assembly into the spore coat is dependent on the coat morphogenetic proteins CotE and SpoIVA. In Bacillus subtilis (strain 168), this protein is Spore coat protein GerQ (gerQ).